The primary structure comprises 60 residues: MAKKLEITLTRSVIGRPQDQRATVEALGLKKLNSTVVKEETPAILGMINKVSHLVTVKEA.

It belongs to the universal ribosomal protein uL30 family. Part of the 50S ribosomal subunit.

The chain is Large ribosomal subunit protein uL30 from Bacillus anthracis (strain A0248).